An 824-amino-acid polypeptide reads, in one-letter code: Leucine--tRNA ligase (824 aa).

The 'HIGH' region signature appears at 41-51; sequence PYPSGTLHVGH. A 'KMSKS' region motif is present at residues 580 to 584; the sequence is KMSKS. Position 583 (lysine 583) interacts with ATP.

This sequence belongs to the class-I aminoacyl-tRNA synthetase family.

It is found in the cytoplasm. The catalysed reaction is tRNA(Leu) + L-leucine + ATP = L-leucyl-tRNA(Leu) + AMP + diphosphate. This chain is Leucine--tRNA ligase, found in Thermotoga maritima (strain ATCC 43589 / DSM 3109 / JCM 10099 / NBRC 100826 / MSB8).